The primary structure comprises 258 residues: MGGKMLRSVSELIYKVYARYLLGQINLNNLPGHVALIVDGNRRWARKEKRDRISDGHRAGAGKAVDFLHWCDELDINIVTLYLLSNDNLKNRNRQELNDLVQVICDLIAQVSKRWKVNHVGSCENLPELLGNSLEGVKSSTKTNRYSERSMTVNLAIGYSGRAEITEAVRKIVNTYPIGDLPEKITEEVISANLYTGGLSDPDLIIRTSGEQRLSDFMPWQSTHSEFYFLEALGPDLRKVDFLRAIRDFSIRRRSFGA.

Residue Asp-39 is part of the active site. Asp-39 provides a ligand contact to Mg(2+). Substrate-binding positions include 40-43, Trp-44, Arg-52, His-57, and 85-87; these read GNRR and SND. Catalysis depends on Asn-88, which acts as the Proton acceptor. Substrate is bound by residues Arg-92, Arg-207, and 213–215; that span reads RLS. Glu-226 is a binding site for Mg(2+).

It belongs to the UPP synthase family. As to quaternary structure, homodimer. The cofactor is Mg(2+).

Catalyzes the condensation of isopentenyl diphosphate (IPP) with allylic pyrophosphates generating different type of terpenoids. The polypeptide is Isoprenyl transferase 2 (Tropheryma whipplei (strain Twist) (Whipple's bacillus)).